A 535-amino-acid polypeptide reads, in one-letter code: Methylmalonate-semialdehyde/malonate-semialdehyde dehydrogenase [acylating], mitochondrial (535 aa).

The N-terminal 33 residues, 1 to 33 (MAALLAAAAVRARILQVSSKVKSSPTWYSASSF), are a transit peptide targeting the mitochondrion. N6-acetyllysine; alternate is present on residues lysine 47, lysine 52, lysine 55, and lysine 76. 4 positions are modified to N6-succinyllysine; alternate: lysine 47, lysine 52, lysine 55, and lysine 76. N6-acetyllysine is present on lysine 87. N6-acetyllysine; alternate is present on residues lysine 117 and lysine 129. Residues lysine 117 and lysine 129 each carry the N6-succinyllysine; alternate modification. Alanine 183, phenylalanine 185, lysine 209, glutamate 212, arginine 213, and serine 262 together coordinate NAD(+). Phosphoserine is present on serine 262. N6-acetyllysine is present on lysine 298. Cysteine 317 serves as the catalytic Nucleophile. Residues lysine 330 and lysine 331 each carry the N6-acetyllysine modification. 2 positions are modified to N6-acetyllysine; alternate: lysine 364 and lysine 376. An N6-succinyllysine; alternate mark is found at lysine 364 and lysine 376. Serine 380 carries the post-translational modification Phosphoserine. Lysine 391 is modified (N6-succinyllysine). An NAD(+)-binding site is contributed by glutamate 417. Position 500 is an N6-acetyllysine (lysine 500). Position 517 is an N6-succinyllysine (lysine 517).

Belongs to the aldehyde dehydrogenase family. As to quaternary structure, homotetramer.

It is found in the mitochondrion. The catalysed reaction is 3-oxopropanoate + NAD(+) + CoA + H2O = hydrogencarbonate + acetyl-CoA + NADH + H(+). The enzyme catalyses 2-methyl-3-oxopropanoate + NAD(+) + CoA + H2O = propanoyl-CoA + hydrogencarbonate + NADH + H(+). It catalyses the reaction (R)-2-methyl-3-oxopropanoate + NAD(+) + CoA + H2O = propanoyl-CoA + hydrogencarbonate + NADH + H(+). It carries out the reaction (S)-2-methyl-3-oxopropanoate + NAD(+) + CoA + H2O = propanoyl-CoA + hydrogencarbonate + NADH + H(+). Malonate and methylmalonate semialdehyde dehydrogenase involved in the catabolism of valine, thymine, and compounds catabolized by way of beta-alanine, including uracil and cytidine. The protein is Methylmalonate-semialdehyde/malonate-semialdehyde dehydrogenase [acylating], mitochondrial of Homo sapiens (Human).